Here is a 96-residue protein sequence, read N- to C-terminus: Nucleoid-associated protein CCA_00330 (96 aa).

This sequence belongs to the YbaB/EbfC family. In terms of assembly, homodimer.

The protein localises to the cytoplasm. Its subcellular location is the nucleoid. In terms of biological role, binds to DNA and alters its conformation. May be involved in regulation of gene expression, nucleoid organization and DNA protection. This Chlamydia caviae (strain ATCC VR-813 / DSM 19441 / 03DC25 / GPIC) (Chlamydophila caviae) protein is Nucleoid-associated protein CCA_00330.